The sequence spans 551 residues: uncharacterized protein (551 aa).

A mitochondrion-targeting transit peptide spans 1-36 (MMALVRDRRAHYVMSIVIRWVHCFSSSLRGTFGTRW). The stretch at 203–315 (TNILLRKLKE…MDSRDRLREE (113 aa)) forms a coiled coil. The interval 354-389 (REASLSPWPKSPPSTTALRPHSATMSVSSAGAQKAK) is disordered. The span at 366–384 (PSTTALRPHSATMSVSSAG) shows a compositional bias: polar residues. Residues 405–439 (KHGLESQIEALKANLENEKKKVERFRKEADRLNKS) are a coiled coil. The interval 519–551 (LQLSPKGKLSESPKEESLEEPSMRQSSPAETVD) is disordered. The span at 541–551 (MRQSSPAETVD) shows a compositional bias: polar residues.

As to quaternary structure, interacts with NOD2.

Its subcellular location is the mitochondrion. This is an uncharacterized protein from Homo sapiens (Human).